Consider the following 373-residue polypeptide: Protein phosphatase 1K, mitochondrial (373 aa).

The region spanning 95–347 (KVGCSTQLGK…DNSTAIVVPF (253 aa)) is the PPM-type phosphatase domain. Residues Asp128, Gly129, and Asp338 each contribute to the Mg(2+) site.

This sequence belongs to the PP2C family. Mg(2+) is required as a cofactor. Mn(2+) serves as cofactor.

Its subcellular location is the mitochondrion matrix. The enzyme catalyses O-phospho-L-seryl-[protein] + H2O = L-seryl-[protein] + phosphate. The catalysed reaction is O-phospho-L-threonyl-[protein] + H2O = L-threonyl-[protein] + phosphate. The chain is Protein phosphatase 1K, mitochondrial (ppm1k) from Xenopus laevis (African clawed frog).